Consider the following 414-residue polypeptide: Gamma-glutamyl phosphate reductase (414 aa).

It belongs to the gamma-glutamyl phosphate reductase family.

Its subcellular location is the cytoplasm. It carries out the reaction L-glutamate 5-semialdehyde + phosphate + NADP(+) = L-glutamyl 5-phosphate + NADPH + H(+). Its pathway is amino-acid biosynthesis; L-proline biosynthesis; L-glutamate 5-semialdehyde from L-glutamate: step 2/2. Catalyzes the NADPH-dependent reduction of L-glutamate 5-phosphate into L-glutamate 5-semialdehyde and phosphate. The product spontaneously undergoes cyclization to form 1-pyrroline-5-carboxylate. This is Gamma-glutamyl phosphate reductase from Limosilactobacillus reuteri (strain DSM 20016) (Lactobacillus reuteri).